A 127-amino-acid polypeptide reads, in one-letter code: Aspartate 1-decarboxylase (127 aa).

Ser-25 acts as the Schiff-base intermediate with substrate; via pyruvic acid in catalysis. The residue at position 25 (Ser-25) is a Pyruvic acid (Ser). Residue Thr-57 coordinates substrate. The active-site Proton donor is Tyr-58. 73–75 (GAA) is a binding site for substrate.

This sequence belongs to the PanD family. Heterooctamer of four alpha and four beta subunits. Pyruvate serves as cofactor. Post-translationally, is synthesized initially as an inactive proenzyme, which is activated by self-cleavage at a specific serine bond to produce a beta-subunit with a hydroxyl group at its C-terminus and an alpha-subunit with a pyruvoyl group at its N-terminus.

It localises to the cytoplasm. The catalysed reaction is L-aspartate + H(+) = beta-alanine + CO2. It participates in cofactor biosynthesis; (R)-pantothenate biosynthesis; beta-alanine from L-aspartate: step 1/1. Its function is as follows. Catalyzes the pyruvoyl-dependent decarboxylation of aspartate to produce beta-alanine. This Bacillus cereus (strain B4264) protein is Aspartate 1-decarboxylase.